The following is a 474-amino-acid chain: Protein FAM161A (474 aa).

Disordered regions lie at residues 78–126 (SSSS…PGEI), 185–210 (QKRREKASDAQETREKMLKRNEDDAE), and 308–364 (REEL…DQGL). The stretch at 188–250 (REKASDAQET…KKTRERSKAA (63 aa)) forms a coiled coil. A required for interaction with CFAP418 region spans residues 274–454 (KLRELCRAKK…PTASSRGREQ (181 aa)). The segment covering 325–335 (LQSSPWPSHST) has biased composition (polar residues). Glycyl lysine isopeptide (Lys-Gly) (interchain with G-Cter in SUMO2) cross-links involve residues Lys-397 and Lys-413. A disordered region spans residues 412–474 (LKETRRPNPS…KELARIGGAR (63 aa)). The span at 422–431 (PRHKSPRRSA) shows a compositional bias: basic residues. Residues 450–468 (RGREQAIRRSEKARMKELA) are compositionally biased toward basic and acidic residues.

This sequence belongs to the FAM161 family. Interacts (via central region) with CFAP418 (via N-terminus); the interaction is direct. Interacts (via C-terminus) with microtubules. Interacts with LCA5. Interacts with CEP290. Interacts with SDCCAG8. Interacts with FAM161B. Interacts with POC1B. Interacts with CEP78. Forms a microtubule-associated complex with POC5, CETN2 and POC1B. Interacts with CCDC15. As to expression, expressed in the retina and kidney.

It is found in the cytoplasm. Its subcellular location is the cytoskeleton. The protein localises to the cilium basal body. The protein resides in the cell projection. It localises to the cilium. It is found in the microtubule organizing center. Its subcellular location is the centrosome. The protein localises to the centriole. Its function is as follows. Involved in ciliogenesis. The protein is Protein FAM161A of Rattus norvegicus (Rat).